The following is an 833-amino-acid chain: Leucine--tRNA ligase (833 aa).

Positions 41 to 52 match the 'HIGH' region motif; the sequence is PYPSGAGLHVGH. Residues 610-614 carry the 'KMSKS' region motif; the sequence is KMSKS. Residue Lys-613 participates in ATP binding.

The protein belongs to the class-I aminoacyl-tRNA synthetase family.

It is found in the cytoplasm. The enzyme catalyses tRNA(Leu) + L-leucine + ATP = L-leucyl-tRNA(Leu) + AMP + diphosphate. The protein is Leucine--tRNA ligase of Streptococcus equi subsp. zooepidemicus (strain H70).